Here is a 325-residue protein sequence, read N- to C-terminus: uncharacterized protein (325 aa).

This is an uncharacterized protein from Escherichia coli (Bacteriophage T4).